The primary structure comprises 1526 residues: Ig-like and fibronectin type-III domain-containing protein 2 (1526 aa).

A signal peptide spans 1–19 (MMRWRLAVLFLTLLASTTG). The segment at 20 to 39 (DDTTTKASVSTTTKKGTDGP) is disordered. Over 20–1415 (DDTTTKASVS…RRSASKGSSS (1396 aa)) the chain is Extracellular. Low complexity predominate over residues 24 to 33 (TKASVSTTTK). The 132-residue stretch at 39-170 (PHLTTDDEGF…ELLEFQVEVL (132 aa)) folds into the Ig-like C2-type 1 domain. Cysteine 61 and cysteine 154 are disulfide-bonded. N-linked (GlcNAc...) asparagine glycosylation is found at asparagine 87, asparagine 143, asparagine 158, asparagine 181, asparagine 414, asparagine 427, asparagine 475, asparagine 489, asparagine 533, asparagine 590, asparagine 617, and asparagine 662. The 92-residue stretch at 379–470 (APRGKRDVDF…VRNIASTNVH (92 aa)) folds into the Fibronectin type-III 1 domain. The 92-residue stretch at 587-678 (APGNVTISEL…TAKLFSTLPT (92 aa)) folds into the Fibronectin type-III 2 domain. Residues 682–724 (PLCTIGEPIYMNDGRVMICDAVNPCPNGFRCTGAGSDLSYCCP) form the WR1 domain. N-linked (GlcNAc...) asparagine glycosylation is found at asparagine 754, asparagine 871, asparagine 906, asparagine 939, asparagine 979, asparagine 1004, and asparagine 1049. Fibronectin type-III domains lie at 827 to 914 (AVRN…TKPA) and 924 to 1020 (APEK…AQKD). An Ig-like C2-type 2 domain is found at 1116 to 1207 (ASVTMKKDKI…SRVEASSEVI (92 aa)). Cysteine 1137 and cysteine 1190 form a disulfide bridge. Residue asparagine 1250 is glycosylated (N-linked (GlcNAc...) asparagine). Residues 1314 to 1406 (APSEVSNVRI…SAIPKDSEPR (93 aa)) form the Fibronectin type-III 5 domain. Residues 1416–1436 (AFWIVVILVVFGVLIAGLAVL) traverse the membrane as a helical segment. Topologically, residues 1437-1526 (SKRRELPYPI…NGMRYAKLET (90 aa)) are cytoplasmic. Positions 1485–1518 (SATTGTAAATQSEWQSANLEANSTTDNSHEYRNG) are disordered. Over residues 1495–1510 (QSEWQSANLEANSTTD) the composition is skewed to polar residues.

Its subcellular location is the cell membrane. The protein is Ig-like and fibronectin type-III domain-containing protein 2 of Caenorhabditis elegans.